The sequence spans 651 residues: Kinesin-like protein KIF22-A (651 aa).

The region spanning 31–359 is the Kinesin motor domain; sequence RVRVAVRLRP…LNFAAKSKQI (329 aa). 116 to 123 contributes to the ATP binding site; it reads GPTGAGKT. Residues 366-413 are disordered; sequence QETTQTVVQPAMKRPREETGHIAGSQKRKKSKNDSTESSPNSSMDTAG. Residues 401-410 are compositionally biased toward polar residues; sequence TESSPNSSMD. Positions 452-498 form a coiled coil; it reads KRERMALLKKWEESQMEIERLKEKQKELEQKAMEAEARLEKSNNSDL. The short motif at 561 to 564 is the Important for regulated proteolytic degradation element; it reads GLEN.

This sequence belongs to the TRAFAC class myosin-kinesin ATPase superfamily. Kinesin family. In terms of processing, ubiquitinated, leading to its subsequent proteasomal degradation.

The protein resides in the nucleus. It localises to the cytoplasm. It is found in the cytoskeleton. Functionally, kinesin family member that is involved in spindle formation and the movements of chromosomes during mitosis and meiosis. Binds to microtubules and to DNA. The polypeptide is Kinesin-like protein KIF22-A (kif22-a) (Xenopus laevis (African clawed frog)).